The following is a 328-amino-acid chain: 2,4-dinitroanisole O-demethylase subunit alpha (328 aa).

The propeptide occupies 1–9 (MSVTSQTSS). The Zn(2+) site is built by histidine 101, histidine 103, aspartate 105, histidine 168, histidine 225, and cysteine 247.

It belongs to the metallo-beta-lactamase superfamily. In terms of assembly, part of the complex DnhAB composed of the 2,4-dinitroanisole O-demethylase alpha (DnhA) and beta (DnhB) subunits. The cofactor is Zn(2+).

It carries out the reaction 2,4-dinitroanisole + H2O = 2,4-dinitrophenol + methanol + H(+). Functionally, involved in the degradation of 2,4-dinitroanisole (DNAN), an insensitive munition ingredient used in explosive formulations as a replacement for 2,4,6-trinitrotoluene (TNT). Catalyzes the removal of the methyl group from 2,4-dinitroanisole (DNAN) to yield 2,4-dinitrophenol (2,4-DNP) and methanol. This chain is 2,4-dinitroanisole O-demethylase subunit alpha, found in Nocardioides sp. (strain JS1661).